A 159-amino-acid chain; its full sequence is Cyclic pyranopterin monophosphate synthase (159 aa).

Residues Leu76–His78 and Met114–Glu115 each bind substrate. Asp129 is a catalytic residue.

Belongs to the MoaC family. Homohexamer; trimer of dimers.

The enzyme catalyses (8S)-3',8-cyclo-7,8-dihydroguanosine 5'-triphosphate = cyclic pyranopterin phosphate + diphosphate. Its pathway is cofactor biosynthesis; molybdopterin biosynthesis. Catalyzes the conversion of (8S)-3',8-cyclo-7,8-dihydroguanosine 5'-triphosphate to cyclic pyranopterin monophosphate (cPMP). This chain is Cyclic pyranopterin monophosphate synthase, found in Clostridium botulinum (strain Alaska E43 / Type E3).